Consider the following 331-residue polypeptide: Glucokinase (331 aa).

13–18 (GDIGGT) contributes to the ATP binding site.

The protein belongs to the bacterial glucokinase family.

The protein resides in the cytoplasm. The catalysed reaction is D-glucose + ATP = D-glucose 6-phosphate + ADP + H(+). In Caulobacter vibrioides (strain ATCC 19089 / CIP 103742 / CB 15) (Caulobacter crescentus), this protein is Glucokinase.